Consider the following 466-residue polypeptide: Tryptophan synthase beta chain 2, chloroplastic (466 aa).

Lys161 is modified (N6-(pyridoxal phosphate)lysine).

The protein belongs to the TrpB family. As to quaternary structure, tetramer of two alpha and two beta chains. Pyridoxal 5'-phosphate serves as cofactor.

The protein localises to the plastid. It is found in the chloroplast. It carries out the reaction (1S,2R)-1-C-(indol-3-yl)glycerol 3-phosphate + L-serine = D-glyceraldehyde 3-phosphate + L-tryptophan + H2O. It functions in the pathway amino-acid biosynthesis; L-tryptophan biosynthesis; L-tryptophan from chorismate: step 5/5. Its function is as follows. The beta subunit is responsible for the synthesis of L-tryptophan from indole and L-serine. In Camptotheca acuminata (Happy tree), this protein is Tryptophan synthase beta chain 2, chloroplastic (TSB).